A 315-amino-acid chain; its full sequence is Acetyl-coenzyme A carboxylase carboxyl transferase subunit alpha (315 aa).

The region spanning 38–292 (RLQKKSNELT…KLRLKEDLAE (255 aa)) is the CoA carboxyltransferase C-terminal domain.

This sequence belongs to the AccA family. In terms of assembly, acetyl-CoA carboxylase is a heterohexamer composed of biotin carboxyl carrier protein (AccB), biotin carboxylase (AccC) and two subunits each of ACCase subunit alpha (AccA) and ACCase subunit beta (AccD).

It localises to the cytoplasm. It catalyses the reaction N(6)-carboxybiotinyl-L-lysyl-[protein] + acetyl-CoA = N(6)-biotinyl-L-lysyl-[protein] + malonyl-CoA. It functions in the pathway lipid metabolism; malonyl-CoA biosynthesis; malonyl-CoA from acetyl-CoA: step 1/1. Its function is as follows. Component of the acetyl coenzyme A carboxylase (ACC) complex. First, biotin carboxylase catalyzes the carboxylation of biotin on its carrier protein (BCCP) and then the CO(2) group is transferred by the carboxyltransferase to acetyl-CoA to form malonyl-CoA. This chain is Acetyl-coenzyme A carboxylase carboxyl transferase subunit alpha, found in Haemophilus influenzae (strain 86-028NP).